The primary structure comprises 930 residues: A disintegrin and metalloproteinase with thrombospondin motifs 5 (930 aa).

The signal sequence occupies residues methionine 1–serine 21. Positions leucine 22–arginine 261 are excised as a propeptide. Low complexity predominate over residues proline 31–glycine 53. Disordered stretches follow at residues proline 31 to glutamine 68 and alanine 207 to arginine 231. Positions alanine 207–serine 214 match the Cysteine switch motif. Cysteine 209 is a binding site for Zn(2+). The span at threonine 211–histidine 225 shows a compositional bias: polar residues. Residues arginine 267–proline 476 form the Peptidase M12B domain. 8 disulfide bridges follow: cysteine 342-cysteine 394, cysteine 371-cysteine 376, cysteine 388-cysteine 471, cysteine 426-cysteine 455, cysteine 497-cysteine 519, cysteine 508-cysteine 529, cysteine 514-cysteine 548, and cysteine 542-cysteine 553. Histidine 410 provides a ligand contact to Zn(2+). The active site involves glutamate 411. Zn(2+)-binding residues include histidine 414 and histidine 420. Residues glutamate 485 to serine 566 form the Disintegrin domain. A glycan (N-linked (GlcNAc...) asparagine) is linked at asparagine 498. One can recognise a TSP type-1 1 domain in the interval histidine 567 to proline 622. Residues tryptophan 570 and tryptophan 573 are each glycosylated (C-linked (Man) tryptophan). 3 disulfides stabilise this stretch: cysteine 579–cysteine 616, cysteine 583–cysteine 621, and cysteine 594–cysteine 606. Serine 582 is a glycosylation site (O-linked (Fuc...) serine). Residues asparagine 728, asparagine 802, and asparagine 807 are each glycosylated (N-linked (GlcNAc...) asparagine). Positions threonine 732–serine 874 are spacer. Residues threonine 875–lysine 929 enclose the TSP type-1 2 domain.

The cofactor is Zn(2+). The precursor is cleaved by furin and PCSK7 outside of the cell. In terms of processing, glycosylated. Can be O-fucosylated by POFUT2 on a serine or a threonine residue found within the consensus sequence C1-X(2)-(S/T)-C2-G of the TSP type-1 repeat domains where C1 and C2 are the first and second cysteine residue of the repeat, respectively. Fucosylated repeats can then be further glycosylated by the addition of a beta-1,3-glucose residue by the glucosyltransferase, B3GALTL. Fucosylation mediates the efficient secretion of ADAMTS family members. Can also be C-glycosylated with one or two mannose molecules on tryptophan residues within the consensus sequence W-X-X-W of the TPRs, and N-glycosylated. These other glycosylations can also facilitate secretion. As to expression, expressed in skeletal muscle.

The protein resides in the secreted. It is found in the extracellular space. Its subcellular location is the extracellular matrix. Metalloproteinase that plays an important role in connective tissue organization, development, inflammation and cell migration. Extracellular matrix (ECM) degrading enzyme that shows proteolytic activity toward the hyalectan group of chondroitin sulfate proteoglycans (CSPGs) including ACAN, VCAN, BCAN and NCAN. Cleavage within the hyalectans occurs at Glu-Xaa recognition motifs. Plays a role in embryonic development, including limb and cardiac morphogenesis, and skeletal muscle development through its VCAN remodeling properties. Cleaves VCAN in the pericellular matrix surrounding myoblasts, facilitating myoblast contact and fusion which is required for skeletal muscle development and regeneration. Participates in the development of brown adipose tissue and browning of white adipose tissue. Plays an important role for T-lymphocyte migration from draining lymph nodes following viral infection. In Mus musculus (Mouse), this protein is A disintegrin and metalloproteinase with thrombospondin motifs 5 (Adamts5).